The sequence spans 568 residues: Urease subunit alpha (568 aa).

The region spanning 129-568 (GAIDSHIHFI…LPMAQRYFLF (440 aa)) is the Urease domain. Ni(2+) is bound by residues histidine 134, histidine 136, and lysine 217. Position 217 is an N6-carboxylysine (lysine 217). A substrate-binding site is contributed by histidine 219. Residues histidine 246 and histidine 272 each contribute to the Ni(2+) site. Catalysis depends on histidine 320, which acts as the Proton donor. Aspartate 360 is a binding site for Ni(2+).

It belongs to the metallo-dependent hydrolases superfamily. Urease alpha subunit family. As to quaternary structure, heterotrimer of UreA (gamma), UreB (beta) and UreC (alpha) subunits. Three heterotrimers associate to form the active enzyme. Requires Ni cation as cofactor. Carboxylation allows a single lysine to coordinate two nickel ions.

It localises to the cytoplasm. It catalyses the reaction urea + 2 H2O + H(+) = hydrogencarbonate + 2 NH4(+). Its pathway is nitrogen metabolism; urea degradation; CO(2) and NH(3) from urea (urease route): step 1/1. In Saccharophagus degradans (strain 2-40 / ATCC 43961 / DSM 17024), this protein is Urease subunit alpha.